The following is a 402-amino-acid chain: MGGRRMPLWALLLLWTSCSFSLPTDTASFGRILLKKMPSVREILEERGVDMTRISAEWGEFIKKSSFTNVTSPVVLTNYLDTQYYGEIGIGTPSQTFKVIFDTGSANLWVPSTKCGPLYTACEIHNLYDSSESSSYMENGTEFTIHYGSGKVKGFLSQDVVTVGGIIVTQTFGEVTELPLIPFMLAKFDGVLGMGFPAQAVDGVIPVFDHILSQRVLKEEVFSVYYSRESHLLGGEVVLGGSDPQHYQGNFHYVSISKAGSWQITMKGVSVGPATLLCEEGCMAVVDTGTSYISGPTSSLQLIMQALGVKEKRANNYVVNCSQVPTLPDISFYLGGRTYTLSNMDYVQKNPFRNDDLCILALQGLDIPPPTGPVWVLGATFIRKFYTEFDRHNNRIGFALAR.

A signal peptide spans 1-26; sequence MGGRRMPLWALLLLWTSCSFSLPTDT. A propeptide spans 27-64 (activation peptide); sequence ASFGRILLKKMPSVREILEERGVDMTRISAEWGEFIKK. N-linked (GlcNAc...) asparagine glycosylation is present at asparagine 69. The Peptidase A1 domain occupies 84 to 399; that stretch reads YYGEIGIGTP…DRHNNRIGFA (316 aa). Residue aspartate 102 is part of the active site. Cysteines 115 and 122 form a disulfide. A glycan (N-linked (GlcNAc...) asparagine) is linked at asparagine 139. Cysteine 278 and cysteine 282 are joined by a disulfide. The active site involves aspartate 287. N-linked (GlcNAc...) asparagine glycosylation occurs at asparagine 320. Cysteine 321 and cysteine 358 are joined by a disulfide.

This sequence belongs to the peptidase A1 family. In terms of assembly, interacts with ATP6AP2.

The protein resides in the secreted. Its subcellular location is the membrane. It carries out the reaction Cleavage of Leu-|-Xaa bond in angiotensinogen to generate angiotensin I.. Interaction with ATP6AP2 results in a 5-fold increased efficiency in angiotensinogen processing. Functionally, renin is a highly specific endopeptidase, whose only known function is to generate angiotensin I from angiotensinogen in the plasma, initiating a cascade of reactions that produce an elevation of blood pressure and increased sodium retention by the kidney. This is Renin (Ren1) from Rattus norvegicus (Rat).